Reading from the N-terminus, the 473-residue chain is tRNA modification GTPase MnmE (473 aa).

3 residues coordinate (6S)-5-formyl-5,6,7,8-tetrahydrofolate: arginine 30, glutamate 95, and arginine 134. The 165-residue stretch at glycine 230–glutamate 394 folds into the TrmE-type G domain. GTP-binding positions include asparagine 240–threonine 245, serine 259–threonine 265, and aspartate 284–glycine 287. Mg(2+)-binding residues include serine 244 and threonine 265. Residue lysine 473 coordinates (6S)-5-formyl-5,6,7,8-tetrahydrofolate.

It belongs to the TRAFAC class TrmE-Era-EngA-EngB-Septin-like GTPase superfamily. TrmE GTPase family. Homodimer. Heterotetramer of two MnmE and two MnmG subunits. K(+) is required as a cofactor.

The protein localises to the cytoplasm. Exhibits a very high intrinsic GTPase hydrolysis rate. Involved in the addition of a carboxymethylaminomethyl (cmnm) group at the wobble position (U34) of certain tRNAs, forming tRNA-cmnm(5)s(2)U34. This is tRNA modification GTPase MnmE from Chlorobium phaeovibrioides (strain DSM 265 / 1930) (Prosthecochloris vibrioformis (strain DSM 265)).